The sequence spans 856 residues: MNVIDTDDLEKHTPMMRQYLTMKAEHHDMLLFYRMGDFYELFYDDAKRASELLGISLTARGKSGGDPIPMAGIPYHAVEGYLAKLVQIGQSVAICEQIGDPATAKGPVERKVVRIVTPGTLTDEALLQERQDNLLAAVYQGKVGFGYATLDVSSGRFVIAELDTKESLEAELQRTNPVEILYSEDFGELGLLSHFKGKRRRPEWEFDYDTSIKLLLAQFGTKDLHGFGISDARLSLQAAGCLMQYVKDTQRTTLPHINAIIRFNQADSIVLDAATRRNLELTQNLAGGRDNTLAAVLDNTATAMGSRMLQRWIHQPLRDPNQIIARQTAVNELLKTGTHEPLHEQLKALGDIERIMARLALRTARPRDFARLRQALSLLPELQQSLSVLNAPHTVKLCQYLGEFPEEQALLERAIVDNPPMLIRDGGVIREGYNNELDEWRGLSEGASDYLVQLEAREKERTGINTLKVGYNRVHGYYIEVSRLQSSQVPLNYQRRQTLKNMERYITPELKEYEEKVLSSQGKALALEKQLWEQLFDLILPKLHELQAFARAAAELDVLSNFAERAETLGYICPQLSQDIGVQIDAGRHPVVERVSQTPFIANPVTLHNQRRMLIVTGPNMGGKSTYMRQVALITLMAHIGCFVPAERAVIGPIDRIFTRIGASDDLASGRSTFMVEMTETANILHNATAQSLVLMDEIGRGTSTYDGLSLAWSAAEYLAQQIGAMTLFATHYFELTQLPDLMAGVYNVHLDAIEHEDTIAFMHAVQEGAASKSYGLQVAALAGVPAKVIKAAKHKLQQLESRDHQLEGTKTPIQTLLALPEPAENPALTKLQAINPDNLTPKQALDLLYELKRLS.

Position 618-625 (618-625) interacts with ATP; the sequence is GPNMGGKS.

It belongs to the DNA mismatch repair MutS family.

Its function is as follows. This protein is involved in the repair of mismatches in DNA. It is possible that it carries out the mismatch recognition step. This protein has a weak ATPase activity. The sequence is that of DNA mismatch repair protein MutS from Shewanella putrefaciens (strain CN-32 / ATCC BAA-453).